A 343-amino-acid polypeptide reads, in one-letter code: 4-hydroxy-2-oxovalerate aldolase 1 (343 aa).

The Pyruvate carboxyltransferase domain maps to 8-260; it reads VTVHDMTLRD…ETGVDVAKIT (253 aa). Residue 16–17 participates in substrate binding; sequence RD. Aspartate 17 is a Mn(2+) binding site. Histidine 20 acts as the Proton acceptor in catalysis. The substrate site is built by serine 170 and histidine 199. 2 residues coordinate Mn(2+): histidine 199 and histidine 201. Tyrosine 290 serves as a coordination point for substrate.

This sequence belongs to the 4-hydroxy-2-oxovalerate aldolase family.

The catalysed reaction is (S)-4-hydroxy-2-oxopentanoate = acetaldehyde + pyruvate. The protein is 4-hydroxy-2-oxovalerate aldolase 1 of Dechloromonas aromatica (strain RCB).